We begin with the raw amino-acid sequence, 394 residues long: Endothelial cell-selective adhesion molecule (394 aa).

Residues 1–29 form the signal peptide; the sequence is MILQAGTPETSLLRVLFLGLSTLAAFSRA. Over 30-251 the chain is Extracellular; sequence QMELHVPPGL…LDVMTGSKAA (222 aa). One can recognise an Ig-like V-type domain in the interval 37-146; it reads PGLNKLEAVE…EGKSIGHSIK (110 aa). N-linked (GlcNAc...) asparagine glycosylation is found at Asn111, Asn172, Asn216, and Asn239. The region spanning 159–243 is the Ig-like C2-type domain; that stretch reads PSCSLQGVPY…GFAKCNVTLD (85 aa). Cys177 and Cys227 form a disulfide bridge. The helical transmembrane segment at 252 to 272 threads the bilayer; it reads VVAGAVVGTFVGLVLIAGLVL. Topologically, residues 273–394 are cytoplasmic; it reads LYQRRSKTLE…PAQSQAGSLV (122 aa). Position 304 is a phosphoserine (Ser304). Composition is skewed to polar residues over residues 304 to 318 and 335 to 347; these read SDTI…SVTS and FTPT…QALS. Positions 304–372 are disordered; it reads SDTISKNGTL…SLTPGGVSSS (69 aa). 2 positions are modified to phosphothreonine: Thr336 and Thr338. 4 positions are modified to phosphoserine: Ser340, Ser343, Ser348, and Ser375.

Interacts with MAGI1. Highly expressed in the heart and lung. Weakly expressed in the kidney and skin. Expression is restricted to the vascular endothelial cells. Expressed in the kidney, heart and tongue (at protein level). Also expressed on megakaryocytes and activated platelets.

The protein resides in the cell junction. Its subcellular location is the adherens junction. It is found in the tight junction. It localises to the cell membrane. Functionally, can mediate aggregation most likely through a homophilic molecular interaction. The protein is Endothelial cell-selective adhesion molecule (Esam) of Mus musculus (Mouse).